The primary structure comprises 504 residues: Glycerol kinase (504 aa).

Residue T14 coordinates ADP. 3 residues coordinate ATP: T14, T15, and S16. Sn-glycerol 3-phosphate is bound at residue T14. R18 contributes to the ADP binding site. Residues R84, E85, Y136, and D246 each contribute to the sn-glycerol 3-phosphate site. Glycerol is bound by residues R84, E85, Y136, D246, and Q247. The ADP site is built by T268 and G311. Positions 268, 311, 315, and 412 each coordinate ATP. Residues G412 and N416 each contribute to the ADP site.

The protein belongs to the FGGY kinase family.

The enzyme catalyses glycerol + ATP = sn-glycerol 3-phosphate + ADP + H(+). The protein operates within polyol metabolism; glycerol degradation via glycerol kinase pathway; sn-glycerol 3-phosphate from glycerol: step 1/1. Inhibited by fructose 1,6-bisphosphate (FBP). Functionally, key enzyme in the regulation of glycerol uptake and metabolism. Catalyzes the phosphorylation of glycerol to yield sn-glycerol 3-phosphate. This chain is Glycerol kinase, found in Aliivibrio salmonicida (strain LFI1238) (Vibrio salmonicida (strain LFI1238)).